Consider the following 258-residue polypeptide: NAD kinase (258 aa).

Asp-45 functions as the Proton acceptor in the catalytic mechanism. Residues 45 to 46, 117 to 118, Asp-147, Ala-155, 158 to 163, and Ala-182 each bind NAD(+); these read DG, NE, and TAYNYS.

Belongs to the NAD kinase family. It depends on a divalent metal cation as a cofactor.

Its subcellular location is the cytoplasm. It catalyses the reaction NAD(+) + ATP = ADP + NADP(+) + H(+). In terms of biological role, involved in the regulation of the intracellular balance of NAD and NADP, and is a key enzyme in the biosynthesis of NADP. Catalyzes specifically the phosphorylation on 2'-hydroxyl of the adenosine moiety of NAD to yield NADP. The polypeptide is NAD kinase (Xanthomonas oryzae pv. oryzae (strain MAFF 311018)).